Reading from the N-terminus, the 221-residue chain is Ribosomal RNA large subunit methyltransferase E (221 aa).

G72, W74, D91, D107, and D131 together coordinate S-adenosyl-L-methionine. Catalysis depends on K171, which acts as the Proton acceptor.

Belongs to the class I-like SAM-binding methyltransferase superfamily. RNA methyltransferase RlmE family.

It is found in the cytoplasm. It catalyses the reaction uridine(2552) in 23S rRNA + S-adenosyl-L-methionine = 2'-O-methyluridine(2552) in 23S rRNA + S-adenosyl-L-homocysteine + H(+). In terms of biological role, specifically methylates the uridine in position 2552 of 23S rRNA at the 2'-O position of the ribose in the fully assembled 50S ribosomal subunit. The sequence is that of Ribosomal RNA large subunit methyltransferase E from Zymomonas mobilis subsp. mobilis (strain ATCC 31821 / ZM4 / CP4).